Here is a 510-residue protein sequence, read N- to C-terminus: 2,3-bisphosphoglycerate-independent phosphoglycerate mutase (510 aa).

2 residues coordinate Mn(2+): aspartate 12 and serine 62. The Phosphoserine intermediate role is filled by serine 62. Residues histidine 123, 152–153 (RD), arginine 184, arginine 190, 257–260 (RADR), and lysine 331 contribute to the substrate site. Mn(2+) contacts are provided by aspartate 399, histidine 403, aspartate 440, histidine 441, and histidine 458.

It belongs to the BPG-independent phosphoglycerate mutase family. As to quaternary structure, monomer. It depends on Mn(2+) as a cofactor.

The enzyme catalyses (2R)-2-phosphoglycerate = (2R)-3-phosphoglycerate. It participates in carbohydrate degradation; glycolysis; pyruvate from D-glyceraldehyde 3-phosphate: step 3/5. Catalyzes the interconversion of 2-phosphoglycerate and 3-phosphoglycerate. This Lawsonia intracellularis (strain PHE/MN1-00) protein is 2,3-bisphosphoglycerate-independent phosphoglycerate mutase.